A 241-amino-acid chain; its full sequence is Large ribosomal subunit protein eL32 (241 aa).

Over residues 1–16 (MADNEEDVEAEEEYTE) the composition is skewed to acidic residues. Disordered regions lie at residues 1 to 47 (MADN…GADQ) and 68 to 182 (VGGL…HPSG). The segment covering 29-44 (ESLREAGFESVEDVRG) has biased composition (basic and acidic residues). Residues 73-96 (VESETEAEVEEEGGEEAPDEDVET) are compositionally biased toward acidic residues. Residues 103 to 116 (LTEKTPDLSDEDAR) show a composition bias toward basic and acidic residues. Residues 133-159 (DHHKKKRVSTSWRKPRGQLSKQRRGIK) are compositionally biased toward basic residues.

The protein belongs to the eukaryotic ribosomal protein eL32 family. In terms of assembly, part of the 50S ribosomal subunit. Interacts weakly with protein L15.

Binds to the 23S rRNA. The chain is Large ribosomal subunit protein eL32 (rpl32e) from Haloarcula marismortui (strain ATCC 43049 / DSM 3752 / JCM 8966 / VKM B-1809) (Halobacterium marismortui).